The primary structure comprises 1040 residues: Multidrug resistance protein MdtB (1040 aa).

The next 12 helical transmembrane spans lie at 16-36 (FIMRPVATTLLMVAILLAGII), 347-367 (LMMAIALVVMIIYLFLRNIPA), 369-389 (IIPGVAVPLSLIGTFAVMVFL), 396-416 (LTLMALTIATGFVVDDAIVVI), 440-460 (IGFTIISLTFSLIAVLIPLLF), 472-492 (FAITLAVAILISAVVSLTLTP), 537-557 (WLTLSVALSTLLLSVLLWVFI), 863-883 (LGSTVWLIVAAVVAMYIVLGI), 888-908 (FIHPITILSTLPTAGVGALLA), 911-931 (IAGSELDVIAIIGIILLIGIV), 968-988 (ILMTTLAALLGALPLMLSTGV), and 998-1018 (IGMVGGLIVSQVLTLFTTPVI).

This sequence belongs to the resistance-nodulation-cell division (RND) (TC 2.A.6) family. MdtB subfamily. Part of a tripartite efflux system composed of MdtA, MdtB and MdtC. MdtB forms a heteromultimer with MdtC.

The protein localises to the cell inner membrane. Its function is as follows. The MdtABC tripartite complex confers resistance against novobiocin and deoxycholate. The protein is Multidrug resistance protein MdtB of Escherichia coli (strain K12 / MC4100 / BW2952).